The sequence spans 260 residues: MKVRTLTAIIALLIFLPILLMGGTTLMLFAYLLALIALKELLNMNMIKLISVPGIFSALALIIIMLPQSAGDWVSNIQLKSLIAMSFILLSYTVLSKNRFSFMDAAFCLMSVAYVGIGFMYFYATRSDGLHYILYAFLVVWLTDTGAYIFGRLMGKHKLWPVISPNKTIEGFIGGLICSLIVPIVMLFFVDFNLNIWLLLLVTIILSIFGQLGDLVESGFKRHFGVKDSGRILPGHGGILDRFDSFMFVLPLLNILLIQM.

A run of 7 helical transmembrane segments spans residues 9–29 (IIALLIFLPILLMGGTTLMLF), 46–66 (MIKLISVPGIFSALALIIIML), 70–90 (AGDWVSNIQLKSLIAMSFILL), 102–122 (FMDAAFCLMSVAYVGIGFMYF), 130–150 (LHYILYAFLVVWLTDTGAYIF), 172–192 (FIGGLICSLIVPIVMLFFVDF), and 196–216 (IWLLLLVTIILSIFGQLGDLV).

The protein belongs to the CDS family.

The protein localises to the cell membrane. It carries out the reaction a 1,2-diacyl-sn-glycero-3-phosphate + CTP + H(+) = a CDP-1,2-diacyl-sn-glycerol + diphosphate. It participates in phospholipid metabolism; CDP-diacylglycerol biosynthesis; CDP-diacylglycerol from sn-glycerol 3-phosphate: step 3/3. The sequence is that of Phosphatidate cytidylyltransferase (cdsA) from Staphylococcus haemolyticus (strain JCSC1435).